Here is a 104-residue protein sequence, read N- to C-terminus: ATP-dependent Clp protease adapter protein ClpS (104 aa).

The protein belongs to the ClpS family. In terms of assembly, binds to the N-terminal domain of the chaperone ClpA.

Involved in the modulation of the specificity of the ClpAP-mediated ATP-dependent protein degradation. This Bordetella bronchiseptica (strain ATCC BAA-588 / NCTC 13252 / RB50) (Alcaligenes bronchisepticus) protein is ATP-dependent Clp protease adapter protein ClpS.